The chain runs to 87 residues: Mu-theraphotoxin-Cg1a (87 aa).

Positions 1–21 (MKVLVLITLAVLGAMFVWTSA) are cleaved as a signal peptide. Residues 22 to 50 (AELEERGSDQRDSPAWVKSMERIFQSEER) constitute a propeptide that is removed on maturation. Disulfide bonds link Cys52–Cys66, Cys59–Cys71, and Cys65–Cys79.

This sequence belongs to the neurotoxin 10 (Hwtx-1) family. 39 (Jztx-34) subfamily. As to expression, expressed by the venom gland.

It localises to the secreted. Functionally, potent and selective inhibitor of hNav1.7/SCN9A (IC(50)=610 nM). Also shows a weak activity towards Nav1.3/SCN3A (IC(50)=7950 nM). In addition, inhibits voltage-gated potassium channels (Kv) in rat DRG neurons. It does not alter the voltage dependence of activation, but it causes a small hyperpolarizing shift in the steady-state inactivations of Nav1.7/SNC9A. Chimera experiments show that the toxin binds to the DIIS3-S4 linker (site 4) of Nav1.7/SCN9A, whereas Nav1.7/SCN9A Asp-827 residue is shown by substitution experiments to be critical for its sensitivity. The toxin traps the domain II voltage sensor in the closed configuration, and not in an outward position. In vivo, shows analgesic activity in three rodent pain models (formalin-induced, acid-induced, and thermal). This is Mu-theraphotoxin-Cg1a from Chilobrachys guangxiensis (Chinese earth tiger tarantula).